We begin with the raw amino-acid sequence, 366 residues long: Galactoside alpha-(1,2)-fucosyltransferase 1 (366 aa).

Topologically, residues 1-8 are cytoplasmic; sequence MWPLSHRH. A helical; Signal-anchor for type II membrane protein transmembrane segment spans residues 9-25; sequence LCLAFLLVCVLSAISFF. The Lumenal segment spans residues 26–366; sequence LHIHQDSIRH…LSPLWTLAEP (341 aa). N-linked (GlcNAc...) asparagine glycans are attached at residues N66, N302, and N328.

Belongs to the glycosyltransferase 11 family.

Its subcellular location is the golgi apparatus. It is found in the golgi stack membrane. It carries out the reaction a beta-D-galactosyl-(1-&gt;4)-N-acetyl-beta-D-glucosaminyl derivative + GDP-beta-L-fucose = an alpha-L-Fuc-(1-&gt;2)-beta-D-Gal-(1-&gt;4)-beta-D-GlcNAc derivative + GDP + H(+). The enzyme catalyses a ganglioside GA1 + GDP-beta-L-fucose = a ganglioside Fuc-GA1 + GDP + H(+). The catalysed reaction is a beta-D-Gal-(1-&gt;3)-beta-D-GlcNAc-(1-&gt;3)-beta-D-Gal-(1-&gt;4)-beta-D-Glc-(1&lt;-&gt;1')-Cer(d18:1(4E)) + GDP-beta-L-fucose = alpha-L-fucosyl-(1-&gt;2)- beta-D-galactosyl-(1-&gt;3)-N-acetyl-beta-D-glucosaminyl-(1-&gt;3)-beta-D-galactosyl-(1-&gt;4)-beta-D-glucosyl-(1&lt;-&gt;1')-N-acylsphing-4-enine + GDP + H(+). It catalyses the reaction a neolactoside nLc4Cer(d18:1(4E)) + GDP-beta-L-fucose = a neolactoside IV(2)-alpha-Fuc-nLc4Cer(d18:1(4E)) + GDP + H(+). It carries out the reaction a ganglioside GM1 + GDP-beta-L-fucose = a ganglioside Fuc-GM1 + GDP + H(+). The enzyme catalyses beta-D-galactosyl-(1-&gt;3)-N-acetyl-D-galactosamine + GDP-beta-L-fucose = alpha-L-fucosyl-(1-&gt;2)-beta-D-galactosyl-(1-&gt;3)-N-acetyl-D-galactosamine + GDP + H(+). Its pathway is protein modification; protein glycosylation. Functionally, catalyzes the transfer of L-fucose, from a guanosine diphosphate-beta-L-fucose, to the terminal galactose residue of glycoconjugates through an alpha(1,2) linkage leading to H antigen synthesis that is an intermediate substrate in the synthesis of ABO blood group antigens. H antigen is essential for maturation of the glomerular layer of the main olfactory bulb, in cell migration and early cell-cell contacts during tumor associated angiogenesis. Preferentially fucosylates soluble lactose and to a lesser extent fucosylates glycolipids gangliosides GA1 and GM1a. The chain is Galactoside alpha-(1,2)-fucosyltransferase 1 from Aotus azarae (Azara's night monkey).